Here is a 100-residue protein sequence, read N- to C-terminus: Aspartyl/glutamyl-tRNA(Asn/Gln) amidotransferase subunit C (100 aa).

Belongs to the GatC family. Heterotrimer of A, B and C subunits.

It carries out the reaction L-glutamyl-tRNA(Gln) + L-glutamine + ATP + H2O = L-glutaminyl-tRNA(Gln) + L-glutamate + ADP + phosphate + H(+). The catalysed reaction is L-aspartyl-tRNA(Asn) + L-glutamine + ATP + H2O = L-asparaginyl-tRNA(Asn) + L-glutamate + ADP + phosphate + 2 H(+). Its function is as follows. Allows the formation of correctly charged Asn-tRNA(Asn) or Gln-tRNA(Gln) through the transamidation of misacylated Asp-tRNA(Asn) or Glu-tRNA(Gln) in organisms which lack either or both of asparaginyl-tRNA or glutaminyl-tRNA synthetases. The reaction takes place in the presence of glutamine and ATP through an activated phospho-Asp-tRNA(Asn) or phospho-Glu-tRNA(Gln). The protein is Aspartyl/glutamyl-tRNA(Asn/Gln) amidotransferase subunit C of Streptococcus equi subsp. zooepidemicus (strain H70).